The chain runs to 156 residues: Small ribosomal subunit protein uS7 (156 aa).

This sequence belongs to the universal ribosomal protein uS7 family. Part of the 30S ribosomal subunit. Contacts proteins S9 and S11.

One of the primary rRNA binding proteins, it binds directly to 16S rRNA where it nucleates assembly of the head domain of the 30S subunit. Is located at the subunit interface close to the decoding center, probably blocks exit of the E-site tRNA. The polypeptide is Small ribosomal subunit protein uS7 (Thermoanaerobacter pseudethanolicus (strain ATCC 33223 / 39E) (Clostridium thermohydrosulfuricum)).